A 188-amino-acid polypeptide reads, in one-letter code: MKFIFGLGNIGAEYDQTRHNIGFMAVDAFATANHMSFSPSKQFALVAKTIIGGESVMLVKPTTYMNDSGKAVRAILDYYDGDVDDVLVLVDDMDLPFGKMRFRAKGSAGGHNGLKSIMTHTGSQTFLRLKFGLGHPVHEQNVVVNYVLGKFTAAEKPDIDAMLDRSTQAIADWIQGATAPELSNRYNG.

Tyr14 contributes to the tRNA binding site. The active-site Proton acceptor is His19. The tRNA site is built by Tyr64, Asn66, and Asn112.

Belongs to the PTH family. As to quaternary structure, monomer.

The protein resides in the cytoplasm. The enzyme catalyses an N-acyl-L-alpha-aminoacyl-tRNA + H2O = an N-acyl-L-amino acid + a tRNA + H(+). In terms of biological role, hydrolyzes ribosome-free peptidyl-tRNAs (with 1 or more amino acids incorporated), which drop off the ribosome during protein synthesis, or as a result of ribosome stalling. Catalyzes the release of premature peptidyl moieties from peptidyl-tRNA molecules trapped in stalled 50S ribosomal subunits, and thus maintains levels of free tRNAs and 50S ribosomes. In Leuconostoc mesenteroides subsp. mesenteroides (strain ATCC 8293 / DSM 20343 / BCRC 11652 / CCM 1803 / JCM 6124 / NCDO 523 / NBRC 100496 / NCIMB 8023 / NCTC 12954 / NRRL B-1118 / 37Y), this protein is Peptidyl-tRNA hydrolase.